The sequence spans 187 residues: Peptidyl-tRNA hydrolase (187 aa).

Residue Y14 participates in tRNA binding. H19 (proton acceptor) is an active-site residue. The tRNA site is built by Y64, N66, and N112.

It belongs to the PTH family. In terms of assembly, monomer.

Its subcellular location is the cytoplasm. It catalyses the reaction an N-acyl-L-alpha-aminoacyl-tRNA + H2O = an N-acyl-L-amino acid + a tRNA + H(+). In terms of biological role, hydrolyzes ribosome-free peptidyl-tRNAs (with 1 or more amino acids incorporated), which drop off the ribosome during protein synthesis, or as a result of ribosome stalling. Its function is as follows. Catalyzes the release of premature peptidyl moieties from peptidyl-tRNA molecules trapped in stalled 50S ribosomal subunits, and thus maintains levels of free tRNAs and 50S ribosomes. This is Peptidyl-tRNA hydrolase from Bdellovibrio bacteriovorus (strain ATCC 15356 / DSM 50701 / NCIMB 9529 / HD100).